The following is a 556-amino-acid chain: Outer spore wall assembly protein SHE10 (556 aa).

A signal peptide spans 1 to 21; the sequence is MRFLTKFLLFLATVYFGLKYA. The stretch at 135-201 forms a coiled coil; sequence NKNLKRHVER…KQITSDVKKT (67 aa). Over residues 190–208 the composition is skewed to basic and acidic residues; the sequence is EAKQITSDVKKTVESEIKK. 2 disordered regions span residues 190–263 and 534–556; these read EAKQ…EDIT and RKEA…PISA. The segment covering 220–244 has biased composition (low complexity); it reads IVSTSTIVKTITRTRHSSSSTTSTK. A compositionally biased stretch (basic and acidic residues) spans 245 to 256; sequence SAEETSEKNLET. A coiled-coil region spans residues 481–547; the sequence is KISEFKLLLD…GEVNESSEEE (67 aa).

It belongs to the SHE10 family. Component of the mitochondria-localized RNase mitochondrial RNA-processing (RNase MRP) composed of one single RNA encoded by the NME1 gene and at least 31 proteins. Absent in the nucleus-localized RNase MRP (NuMRP).

The protein localises to the mitochondrion. Involved in spore wall assembly. May be a component of the mitochondrial RNase MRP (MtMRP), a ribonucleoprotein endoribonuclease involved in the cleaving RNA transcripts to generate primers for DNA replication in mitochondria. This is Outer spore wall assembly protein SHE10 from Candida glabrata (strain ATCC 2001 / BCRC 20586 / JCM 3761 / NBRC 0622 / NRRL Y-65 / CBS 138) (Yeast).